Reading from the N-terminus, the 386-residue chain is Protein phosphatase methylesterase 1 (386 aa).

The disordered stretch occupies residues 1-38 (MSALEKSMHLGRLPSRPPLPGSGGSQSGAKMRMGPGRK). Ser15 carries the phosphoserine modification. Arg16 carries the asymmetric dimethylarginine; alternate modification. Arg16 is modified (omega-N-methylarginine; alternate). Ser156 is a catalytic residue. A compositionally biased stretch (acidic residues) spans 255–265 (IEEEEEDEEGS). The interval 255 to 280 (IEEEEEDEEGSESVNKRKKEDDMETK) is disordered. A compositionally biased stretch (basic and acidic residues) spans 268 to 280 (VNKRKKEDDMETK). The active site involves His349.

This sequence belongs to the AB hydrolase superfamily. As to quaternary structure, binds PPP2CA and PPP2CB. In terms of processing, phosphorylated by SIK1 following increases in intracellular sodium, leading to dissociation from the protein phosphatase 2A (PP2A) complex and subsequent dephosphorylation of sodium/potassium-transporting ATPase ATP1A1.

The catalysed reaction is [phosphatase 2A protein]-C-terminal L-leucine methyl ester + H2O = [phosphatase 2A protein]-C-terminal L-leucine + methanol + H(+). Its function is as follows. Demethylates proteins that have been reversibly carboxymethylated. Demethylates PPP2CB (in vitro) and PPP2CA. Binding to PPP2CA displaces the manganese ion and inactivates the enzyme. This Rattus norvegicus (Rat) protein is Protein phosphatase methylesterase 1 (Ppme1).